The following is a 190-amino-acid chain: Xanthine phosphoribosyltransferase (190 aa).

2 residues coordinate xanthine: Leu-20 and Asn-27. 128–132 (ANGKA) contacts 5-phospho-alpha-D-ribose 1-diphosphate. Lys-156 is a binding site for xanthine.

This sequence belongs to the purine/pyrimidine phosphoribosyltransferase family. Xpt subfamily. Homodimer.

Its subcellular location is the cytoplasm. The catalysed reaction is XMP + diphosphate = xanthine + 5-phospho-alpha-D-ribose 1-diphosphate. The protein operates within purine metabolism; XMP biosynthesis via salvage pathway; XMP from xanthine: step 1/1. Its function is as follows. Converts the preformed base xanthine, a product of nucleic acid breakdown, to xanthosine 5'-monophosphate (XMP), so it can be reused for RNA or DNA synthesis. In Finegoldia magna (strain ATCC 29328 / DSM 20472 / WAL 2508) (Peptostreptococcus magnus), this protein is Xanthine phosphoribosyltransferase.